The chain runs to 576 residues: Ecdysone receptor (576 aa).

The modulating stretch occupies residues 1-162; sequence MSLGARGYRR…GPAPRQQEEL (162 aa). The disordered stretch occupies residues 87–154; that stretch reads CTMEQQQPQP…GEARRQKKGP (68 aa). The segment covering 91-106 has biased composition (low complexity); sequence QQQPQPQQQPQQTQPL. The span at 107 to 117 shows a compositional bias: pro residues; that stretch reads PSMPLPMPPTT. 2 NR C4-type zinc fingers span residues 163–183 and 199–223; these read CLVC…CEGC and CKFG…LKKC. The segment at residues 163–235 is a DNA-binding region (nuclear receptor); sequence CLVCGDRASG…VGMRPECVVP (73 aa). The segment at 245-269 is disordered; that stretch reads EKKAQREKDKLPVSTTTVDDHMPPI. Positions 314–548 constitute an NR LBD domain; it reads NQKSLIARLV…FLEEIWDVAD (235 aa).

It belongs to the nuclear hormone receptor family. NR1 subfamily.

Its subcellular location is the nucleus. In terms of biological role, receptor for ecdysone. Binds to ecdysone response elements (ECRES). In Heliothis virescens (Tobacco budworm moth), this protein is Ecdysone receptor (EcR).